Consider the following 203-residue polypeptide: Cardiotrophin-2 (203 aa).

A signal peptide spans Met-1–Ala-21. N-linked (GlcNAc...) asparagine glycosylation is present at Asn-43.

This sequence belongs to the IL-6 superfamily.

It is found in the secreted. In terms of biological role, may have an important role in neuronal precursor development and maturation. This Pan troglodytes (Chimpanzee) protein is Cardiotrophin-2 (CTF2).